Reading from the N-terminus, the 445-residue chain is Methyl-CpG-binding domain protein 4-like protein (445 aa).

Residue Asp429 is part of the active site.

Isoform 1 and isoform 4: Expressed in leaves and flowers, but not in roots or stems.

The protein resides in the nucleus. Functionally, monofunctional DNA glycosylase targeting U:G and T:G mispairs. Excises uracil derivatives and exhibits a preference for a CpG sequence context, irrespective of the methylation status of the complementary strand. The activity follows a biphasic kinetics, with an initial burst of product accumulation followed by a slower phase. Specifically binds its reaction product. Triggers the base excision repair (BER) pathway. The protein is Methyl-CpG-binding domain protein 4-like protein of Arabidopsis thaliana (Mouse-ear cress).